A 295-amino-acid polypeptide reads, in one-letter code: Acetylglutamate kinase (295 aa).

Substrate contacts are provided by residues Gly-70–Gly-71, Arg-92, and Asn-191.

Belongs to the acetylglutamate kinase family. ArgB subfamily.

The protein localises to the cytoplasm. It carries out the reaction N-acetyl-L-glutamate + ATP = N-acetyl-L-glutamyl 5-phosphate + ADP. The protein operates within amino-acid biosynthesis; L-arginine biosynthesis; N(2)-acetyl-L-ornithine from L-glutamate: step 2/4. In terms of biological role, catalyzes the ATP-dependent phosphorylation of N-acetyl-L-glutamate. This is Acetylglutamate kinase from Mycobacterium avium (strain 104).